A 658-amino-acid polypeptide reads, in one-letter code: Threonine--tRNA ligase (658 aa).

Positions 1–61 (MIELVFPDGS…EKGGAFKILT (61 aa)) constitute a TGS domain. A catalytic region spans residues 243 to 535 (DHRKLGRQMD…LIENYAGAFP (293 aa)). Zn(2+) contacts are provided by Cys335, His386, and His512.

The protein belongs to the class-II aminoacyl-tRNA synthetase family. As to quaternary structure, homodimer. Zn(2+) is required as a cofactor.

The protein localises to the cytoplasm. It carries out the reaction tRNA(Thr) + L-threonine + ATP = L-threonyl-tRNA(Thr) + AMP + diphosphate + H(+). Its function is as follows. Catalyzes the attachment of threonine to tRNA(Thr) in a two-step reaction: L-threonine is first activated by ATP to form Thr-AMP and then transferred to the acceptor end of tRNA(Thr). Also edits incorrectly charged L-seryl-tRNA(Thr). The protein is Threonine--tRNA ligase of Phenylobacterium zucineum (strain HLK1).